The chain runs to 383 residues: F-box/kelch-repeat protein At4g19330 (383 aa).

The interval 1–27 (MAYLSFKSNMERTPRESNTPCPPPQPS) is disordered. The F-box domain occupies 28 to 79 (PSLFSSLPDDIVLNILARISTSYYQTLSLVSKTFRLLILSKELDMERSYLGT). Kelch repeat units follow at residues 147 to 192 (ETYE…VLDG), 193 to 239 (KLYV…NIQT), and 272 to 318 (STCE…SEIG).

Its function is as follows. Involved in seed germination. The sequence is that of F-box/kelch-repeat protein At4g19330 from Arabidopsis thaliana (Mouse-ear cress).